Consider the following 299-residue polypeptide: Protoheme IX farnesyltransferase 1 (299 aa).

9 consecutive transmembrane segments (helical) span residues 24–44, 46–66, 97–117, 118–138, 146–166, 170–190, 217–237, 239–259, and 278–298; these read VVAL…PGVP, AAVV…AAMV, LLVA…CCNA, LTAW…TLLL, IVIG…AVNG, AFAL…FWAL, LSIV…VALG, AGAI…FLAV, and IWYL…LIPL.

This sequence belongs to the UbiA prenyltransferase family. Protoheme IX farnesyltransferase subfamily.

It localises to the cell inner membrane. The enzyme catalyses heme b + (2E,6E)-farnesyl diphosphate + H2O = Fe(II)-heme o + diphosphate. It functions in the pathway porphyrin-containing compound metabolism; heme O biosynthesis; heme O from protoheme: step 1/1. In terms of biological role, converts heme B (protoheme IX) to heme O by substitution of the vinyl group on carbon 2 of heme B porphyrin ring with a hydroxyethyl farnesyl side group. The polypeptide is Protoheme IX farnesyltransferase 1 (Chromobacterium violaceum (strain ATCC 12472 / DSM 30191 / JCM 1249 / CCUG 213 / NBRC 12614 / NCIMB 9131 / NCTC 9757 / MK)).